Reading from the N-terminus, the 142-residue chain is Hemoglobin subunit alpha (142 aa).

In terms of domain architecture, Globin spans 2-142; that stretch reads VLSADDKANI…VSTVLTSKYR (141 aa). The residue at position 4 (S4) is a Phosphoserine. 2 positions are modified to N6-succinyllysine: K8 and K12. At K17 the chain carries N6-acetyllysine; alternate. K17 bears the N6-succinyllysine; alternate mark. Position 25 is a phosphotyrosine (Y25). A Phosphoserine modification is found at S36. An N6-succinyllysine modification is found at K41. S50 carries the post-translational modification Phosphoserine. H59 is an O2 binding site. Residue H88 participates in heme b binding. The residue at position 109 (T109) is a Phosphothreonine. Phosphoserine is present on residues S125 and S132. A phosphothreonine mark is found at T135 and T138. At S139 the chain carries Phosphoserine.

This sequence belongs to the globin family. In terms of assembly, heterotetramer of two alpha chains and two beta chains. Red blood cells.

In terms of biological role, involved in oxygen transport from the lung to the various peripheral tissues. Its function is as follows. Hemopressin acts as an antagonist peptide of the cannabinoid receptor CNR1. Hemopressin-binding efficiently blocks cannabinoid receptor CNR1 and subsequent signaling. The sequence is that of Hemoglobin subunit alpha (HBA) from Cricetomys gambianus (Northern giant pouched rat).